The chain runs to 394 residues: Acid ceramidase (394 aa).

Residues 1–20 form the signal peptide; the sequence is MLGRSLLTWVLAAAVTCAQA. Cys-30 and Cys-339 are joined by a disulfide. Cys-142 acts as the Nucleophile in catalysis. Residues Asn-194, Asn-258, Asn-285, and Asn-341 are each glycosylated (N-linked (GlcNAc...) asparagine). A disulfide bridge links Cys-387 with Cys-391.

It belongs to the acid ceramidase family. As to quaternary structure, heterodimer; disulfide-linked. The heterodimer is composed of the disulfide-linked alpha and beta chains produced by autocatalytic cleavage of the precursor. Post-translationally, N-glycosylated. Proteolytically cleaved into two chains alpha and beta that remain associated via a disulfide bond. Cleavage gives rise to a conformation change that activates the enzyme. The same catalytic Cys residue mediates the autoproteolytic cleavage and subsequent hydrolysis of lipid substrates. The beta chain may undergo an additional C-terminal processing.

It localises to the lysosome. The protein resides in the secreted. The catalysed reaction is an N-acylsphing-4-enine + H2O = sphing-4-enine + a fatty acid. The enzyme catalyses N-dodecanoylsphing-4-enine + H2O = dodecanoate + sphing-4-enine. It catalyses the reaction N-tetradecanoylsphing-4-enine + H2O = tetradecanoate + sphing-4-enine. It carries out the reaction N-hexadecanoylsphing-4-enine + H2O = sphing-4-enine + hexadecanoate. The catalysed reaction is N-octadecanoylsphing-4-enine + H2O = sphing-4-enine + octadecanoate. The enzyme catalyses N-dodecanoyl-(4R)-hydroxysphinganine + H2O = (4R)-hydroxysphinganine + dodecanoate. It catalyses the reaction N-(dodecanoyl)-sphinganine + H2O = dodecanoate + sphinganine. It carries out the reaction N-(acetyl)-sphing-4-enine + H2O = sphing-4-enine + acetate. The catalysed reaction is N-(hexanoyl)sphing-4-enine + H2O = hexanoate + sphing-4-enine. The enzyme catalyses N-octanoylsphing-4-enine + H2O = octanoate + sphing-4-enine. It catalyses the reaction N-(9Z-octadecenoyl)-sphing-4-enine + H2O = sphing-4-enine + (9Z)-octadecenoate. It carries out the reaction N-dodecanoylethanolamine + H2O = dodecanoate + ethanolamine. Its pathway is lipid metabolism; sphingolipid metabolism. In terms of biological role, lysosomal ceramidase that hydrolyzes sphingolipid ceramides into sphingosine and free fatty acids at acidic pH. Ceramides, sphingosine, and its phosphorylated form sphingosine-1-phosphate are bioactive lipids that mediate cellular signaling pathways regulating several biological processes including cell proliferation, apoptosis and differentiation. Has a higher catalytic efficiency towards C12-ceramides versus other ceramides. Also catalyzes the reverse reaction allowing the synthesis of ceramides from fatty acids and sphingosine. For the reverse synthetic reaction, the natural sphingosine D-erythro isomer is more efficiently utilized as a substrate compared to D-erythro-dihydrosphingosine and D-erythro-phytosphingosine, while the fatty acids with chain lengths of 12 or 14 carbons are the most efficiently used. Also has an N-acylethanolamine hydrolase activity. By regulating the levels of ceramides, sphingosine and sphingosine-1-phosphate in the epidermis, mediates the calcium-induced differentiation of epidermal keratinocytes. Also indirectly regulates tumor necrosis factor/TNF-induced apoptosis. By regulating the intracellular balance between ceramides and sphingosine, in adrenocortical cells, probably also acts as a regulator of steroidogenesis. The sequence is that of Acid ceramidase from Rattus norvegicus (Rat).